We begin with the raw amino-acid sequence, 56 residues long: Meucin-25 (56 aa).

The N-terminal stretch at 1–31 (MFRIEYSLVQLLLRNVTIPLLLIIQMHIMSS) is a signal peptide.

It belongs to the non-disulfide-bridged peptide (NDBP) superfamily. Antimalarial peptide (group 5) family. Expressed by the venom gland.

The protein localises to the secreted. Functionally, this synthetic cationic peptide inhibits the development of Plasmodium berghei ookinetes, kills intraerythrocytic P.falciparum, and is cytotoxic to the Drosophila S2 cell at micromolar concentrations. No antibacterial, antifungal and hemolytic activities have been found at micromolar concentrations. In Mesobuthus eupeus (Lesser Asian scorpion), this protein is Meucin-25.